An 845-amino-acid polypeptide reads, in one-letter code: Protein P (845 aa).

A terminal protein domain (TP) region spans residues 1 to 179 (MPLSYQHFRK…FCGSPYSWEQ (179 aa)). Positions 180–348 (ELHHGRLVIK…YCLSHLVNLL (169 aa)) are spacer. A polymerase/reverse transcriptase domain (RT) region spans residues 349–692 (EDWGPCTEHG…YMNLYPVARQ (344 aa)). The Reverse transcriptase domain maps to 359–602 (EHHIRIPRTP…YSLNFMGYVI (244 aa)). Positions 431, 553, and 554 each coordinate Mg(2+).

Belongs to the hepadnaviridae P protein family.

The catalysed reaction is DNA(n) + a 2'-deoxyribonucleoside 5'-triphosphate = DNA(n+1) + diphosphate. The enzyme catalyses Endonucleolytic cleavage to 5'-phosphomonoester.. With respect to regulation, activated by host HSP70 and HSP40 in vitro to be able to bind the epsilon loop of the pgRNA. Because deletion of the RNase H region renders the protein partly chaperone-independent, the chaperones may be needed indirectly to relieve occlusion of the RNA-binding site by this domain. Inhibited by several reverse-transcriptase inhibitors: Lamivudine, Adefovir and Entecavir. In terms of biological role, multifunctional enzyme that converts the viral RNA genome into dsDNA in viral cytoplasmic capsids. This enzyme displays a DNA polymerase activity that can copy either DNA or RNA templates, and a ribonuclease H (RNase H) activity that cleaves the RNA strand of RNA-DNA heteroduplexes in a partially processive 3'- to 5'-endonucleasic mode. Neo-synthesized pregenomic RNA (pgRNA) are encapsidated together with the P protein, and reverse-transcribed inside the nucleocapsid. Initiation of reverse-transcription occurs first by binding the epsilon loop on the pgRNA genome, and is initiated by protein priming, thereby the 5'-end of (-)DNA is covalently linked to P protein. Partial (+)DNA is synthesized from the (-)DNA template and generates the relaxed circular DNA (RC-DNA) genome. After budding and infection, the RC-DNA migrates in the nucleus, and is converted into a plasmid-like covalently closed circular DNA (cccDNA). The activity of P protein does not seem to be necessary for cccDNA generation, and is presumably released from (+)DNA by host nuclear DNA repair machinery. The polypeptide is Protein P (Homo sapiens (Human)).